The primary structure comprises 518 residues: Cytochrome P450 monooxygenase psoD (518 aa).

Heme is bound at residue Cys442.

This sequence belongs to the cytochrome P450 family. Heme is required as a cofactor.

The protein operates within secondary metabolite biosynthesis. Its function is as follows. Cytochrome P450 monooxygenase; part of the gene cluster that mediates the biosynthesis of pseurotin A, a competitive inhibitor of chitin synthase and an inducer of nerve-cell proliferation. The PKS-NRPS hybrid synthetase psoA is responsible for the biosynthesis of azaspirene, one of the first intermediates having the 1-oxa-7-azaspiro[4,4]-non-2-ene-4,6-dione core of pseurotin, via condensation of one acetyl-CoA, 4 malonyl-CoA, and a L-phenylalanine molecule. The dual-functional monooxygenase/methyltransferase psoF seems to be involved in the addition of the C3 methyl group onto the pseurotin scaffold. Azaspirene is then converted to synerazol through 4 steps including oxidation of C17 by the cytochrome P450 monooxygenase psoD, O-methylation of the hydroxy group of C8 by the methyltransferase psoC, and the trans-to-cis isomerization of the C13 olefin by the glutathione S-transferase psoE. The fourth step of synerazol production is performed by the dual-functional monooxygenase/methyltransferase psoF which seems to catalyze the epoxidation of the intermediate deepoxy-synerazol. Synerazol can be attacked by a water molecule nonenzymatically at two different positions to yield two diol products, pseurotin A and pseurotin D. The polypeptide is Cytochrome P450 monooxygenase psoD (Aspergillus fumigatus (strain ATCC MYA-4609 / CBS 101355 / FGSC A1100 / Af293) (Neosartorya fumigata)).